Consider the following 631-residue polypeptide: Bromodomain-containing protein 9 (631 aa).

2 disordered regions span residues 1–26 (MGKK…PLEK) and 39–116 (VTEL…TLPK). Basic and acidic residues-rich tracts occupy residues 9 to 26 (RPEW…PLEK) and 50 to 63 (SYYD…WERH). The segment covering 64-73 (KEKKKKKKKK) has biased composition (basic residues). Residues 74-85 (SEKEKYADDDER) show a composition bias toward basic and acidic residues. The span at 86 to 96 (RRRKEEKKKKR) shows a compositional bias: basic residues. In terms of domain architecture, Bromo spans 166 to 270 (NEATPHQQLL…HTGFKMMSKQ (105 aa)). The interval 244 to 246 (VYN) is histone H4K5ac H4K8ac and histone H4K5bu H4K8bu binding. The disordered stretch occupies residues 571–631 (ASVDRVGSRP…SPEPGSTANS (61 aa)). Residues 581 to 590 (SSNLSSLSNA) show a composition bias toward low complexity.

Binds acetylated histones H3 and H4. Binds butyrylated histone H4.

It localises to the nucleus. Functionally, plays a role in chromatin remodeling and regulation of transcription. Acts as a chromatin reader that recognizes and binds acylated histones: binds histones that are acetylated and/or butyrylated. The sequence is that of Bromodomain-containing protein 9 (brd9) from Danio rerio (Zebrafish).